We begin with the raw amino-acid sequence, 343 residues long: Cytoplasmic tRNA 2-thiolation protein 1 (343 aa).

The protein belongs to the TtcA family. CTU1/NCS6/ATPBD3 subfamily.

It is found in the cytoplasm. It functions in the pathway tRNA modification; 5-methoxycarbonylmethyl-2-thiouridine-tRNA biosynthesis. Functionally, plays a central role in 2-thiolation of mcm(5)S(2)U at tRNA wobble positions of tRNA(Lys), tRNA(Glu) and tRNA(Gln). Directly binds tRNAs and probably acts by catalyzing adenylation of tRNAs, an intermediate required for 2-thiolation. It is unclear whether it acts as a sulfurtransferase that transfers sulfur from thiocarboxylated URM1 onto the uridine of tRNAs at wobble position. This is Cytoplasmic tRNA 2-thiolation protein 1 from Drosophila virilis (Fruit fly).